The following is a 402-amino-acid chain: Sulfate adenylyltransferase (402 aa).

The protein belongs to the sulfate adenylyltransferase family.

The catalysed reaction is sulfate + ATP + H(+) = adenosine 5'-phosphosulfate + diphosphate. Its pathway is sulfur metabolism; hydrogen sulfide biosynthesis; sulfite from sulfate: step 1/3. The protein is Sulfate adenylyltransferase of Vesicomyosocius okutanii subsp. Calyptogena okutanii (strain HA).